A 343-amino-acid polypeptide reads, in one-letter code: Heat-inducible transcription repressor HrcA (343 aa).

This sequence belongs to the HrcA family.

Its function is as follows. Negative regulator of class I heat shock genes (grpE-dnaK-dnaJ and groELS operons). Prevents heat-shock induction of these operons. This Bacillus subtilis (strain 168) protein is Heat-inducible transcription repressor HrcA.